A 308-amino-acid chain; its full sequence is GDP-L-colitose synthase (308 aa).

Residues Gly-7–Gly-13 and Leu-101–Ser-104 each bind NADP(+). The Proton donor/acceptor role is filled by Tyr-132. Residues Lys-136, Pro-160–Leu-163, and His-176 contribute to the NADP(+) site. Lys-184, Trp-199, and Arg-206 together coordinate substrate.

The protein belongs to the NAD(P)-dependent epimerase/dehydratase family. Fucose synthase subfamily. In terms of assembly, homodimer.

It carries out the reaction GDP-beta-L-colitose + NAD(+) = GDP-4-dehydro-3,6-dideoxy-alpha-D-mannose + NADH + H(+). The enzyme catalyses GDP-beta-L-colitose + NADP(+) = GDP-4-dehydro-3,6-dideoxy-alpha-D-mannose + NADPH + H(+). It participates in nucleotide-sugar metabolism; GDP-L-colitose biosynthesis. Involved in the biosynthesis of the L-colitose (3,6-dideoxyl-L-xylo-hexose) present in the O-antigen region of lipopolysaccharides (LPS) where it serves as antigenic determinant and are vital for bacterial defense and survival. Catalyzes the two-step NADP-dependent conversion of GDP-4-keto-3,6-dideoxy-D-mannose to GDP-L-colitose. ColC is a bifunctional enzyme catalyzing the C-5 epimerization of GDP-4-keto-3,6-dideoxy-D-mannose and the subsequent C-4 keto reduction of the resulting L-epimer to give GDP-L-colitose. It can use both NADP(+) and NAD(+) as electron acceptor, with a slight preference for NADP(+). The polypeptide is GDP-L-colitose synthase (Yersinia pseudotuberculosis).